The following is a 318-amino-acid chain: Replication factor C small subunit (318 aa).

Position 43–50 (43–50) interacts with ATP; that stretch reads GSVGTGKT.

The protein belongs to the activator 1 small subunits family. RfcS subfamily. As to quaternary structure, heteromultimer composed of small subunits (RfcS) and large subunits (RfcL).

Its function is as follows. Part of the RFC clamp loader complex which loads the PCNA sliding clamp onto DNA. The sequence is that of Replication factor C small subunit from Thermoplasma acidophilum (strain ATCC 25905 / DSM 1728 / JCM 9062 / NBRC 15155 / AMRC-C165).